The chain runs to 340 residues: MFNTAKKILIMAGGTGGHIFPALAIANELKKHSSNIQWLGSNLGMENNIIPKHNIKLHTVSSVGLRGKNVISLIKAPFLLSYATLQVIKIFLKFKPDVVLGMGGFTSGIGGLVAWVFKTTLVIHEQNSIPGTTNKILNKIATKTFQAFDDTFIRNATTSGNPIVFNPIEKQNNNKLNLLIIGGSLGSKPINEIVTQLNIDINIWHQTGKLHADTVKSQYKNSAVKVTAFITEMASAYAWADIVLCRAGAMTVSELMLSATSSILIPLPNSIDNHQFHNAKILSDNNAGILIEQKDLTIELLEGILLNINKNQIKQMSSNALKIAKPNAVKQIVDYLLVSD.

UDP-N-acetyl-alpha-D-glucosamine-binding positions include 15-17 (TGG), Asn127, Ser184, Ile230, and Gln275.

It belongs to the glycosyltransferase 28 family. MurG subfamily.

The protein localises to the cell inner membrane. It carries out the reaction di-trans,octa-cis-undecaprenyl diphospho-N-acetyl-alpha-D-muramoyl-L-alanyl-D-glutamyl-meso-2,6-diaminopimeloyl-D-alanyl-D-alanine + UDP-N-acetyl-alpha-D-glucosamine = di-trans,octa-cis-undecaprenyl diphospho-[N-acetyl-alpha-D-glucosaminyl-(1-&gt;4)]-N-acetyl-alpha-D-muramoyl-L-alanyl-D-glutamyl-meso-2,6-diaminopimeloyl-D-alanyl-D-alanine + UDP + H(+). It functions in the pathway cell wall biogenesis; peptidoglycan biosynthesis. Functionally, cell wall formation. Catalyzes the transfer of a GlcNAc subunit on undecaprenyl-pyrophosphoryl-MurNAc-pentapeptide (lipid intermediate I) to form undecaprenyl-pyrophosphoryl-MurNAc-(pentapeptide)GlcNAc (lipid intermediate II). This chain is UDP-N-acetylglucosamine--N-acetylmuramyl-(pentapeptide) pyrophosphoryl-undecaprenol N-acetylglucosamine transferase, found in Vesicomyosocius okutanii subsp. Calyptogena okutanii (strain HA).